Here is a 386-residue protein sequence, read N- to C-terminus: Acyl-[acyl-carrier-protein] dehydrogenase MbtN (386 aa).

Belongs to the acyl-CoA dehydrogenase family. FAD serves as cofactor.

It functions in the pathway siderophore biosynthesis; mycobactin biosynthesis. Catalyzes the dehydrogenation at the alpha-beta position of ACP-bound acyl chains. This results in the introduction of a double bond in the lipidic chain, which is further transferred to the epsilon-amino group of lysine residue in the mycobactin core by MbtK. The polypeptide is Acyl-[acyl-carrier-protein] dehydrogenase MbtN (mbtN) (Mycobacterium bovis (strain ATCC BAA-935 / AF2122/97)).